Reading from the N-terminus, the 446-residue chain is Putative RNA-ligase (446 aa).

The protein belongs to the asfivirus M448R family.

The protein localises to the virion. This is Putative RNA-ligase from African swine fever virus (isolate Tick/Malawi/Lil 20-1/1983) (ASFV).